We begin with the raw amino-acid sequence, 267 residues long: 2-keto-3-deoxy-L-rhamnonate aldolase (267 aa).

The Proton acceptor role is filled by His-49. Residue Gln-151 participates in substrate binding. Glu-153 is a binding site for Mg(2+). Residues Ala-178 and Asp-179 each contribute to the substrate site. Asp-179 is a binding site for Mg(2+).

The protein belongs to the HpcH/HpaI aldolase family. KDR aldolase subfamily. As to quaternary structure, homohexamer. Requires Mg(2+) as cofactor.

The enzyme catalyses 2-dehydro-3-deoxy-L-rhamnonate = (S)-lactaldehyde + pyruvate. Catalyzes the reversible retro-aldol cleavage of 2-keto-3-deoxy-L-rhamnonate (KDR) to pyruvate and lactaldehyde. The sequence is that of 2-keto-3-deoxy-L-rhamnonate aldolase from Salmonella paratyphi A (strain ATCC 9150 / SARB42).